The sequence spans 1090 residues: Exocyst complex component SEC5A (1090 aa).

The disordered stretch occupies residues 18–128 (LKEQAKRDLT…ARKEDDGAWD (111 aa)). The segment covering 45-69 (QQPRQQKPVAAAAAPPKKSAAAVRK) has biased composition (low complexity). Over residues 109–124 (RGSDVREKGRARKEDD) the composition is skewed to basic and acidic residues. Ser180 is subject to Phosphoserine. Disordered stretches follow at residues 759–783 (TSRQ…NTYG), 987–1010 (VETP…DKQS), and 1046–1090 (APLE…PRRR). The span at 998–1009 (RGSEDTVSDDKQ) shows a compositional bias: basic and acidic residues. Over residues 1058-1082 (TYSSFRGSMDSPSRNYRGSQSSGSP) the composition is skewed to polar residues.

It belongs to the SEC5 family. As to quaternary structure, the exocyst complex is composed of SEC3, SEC5, SEC6, SEC8, SEC10, EXO70A1 and EXO84B. Interacts with SEC3A and EXO70B1. Binds to EXO70H1 and EXO70B2. Binds directly to B1L.

The protein localises to the cytoplasm. Its subcellular location is the cytosol. The protein resides in the secreted. It localises to the extracellular exosome. Component of the exocyst complex involved in the docking of exocytic vesicles with fusion sites on the plasma membrane during regulated or polarized secretion. Involved in polarized cell growth and organ morphogenesis. During cytokinesis, involved in cell plate initiation, cell plate maturation and formation of new primary cell wall. Probable component of an exocyst subcomplex specifically involved in autophagy-related, Golgi-independent membrane traffic to the vacuole. Regulates autophagosome formation and autophagy-related Golgi-independent import into the vacuole. This is Exocyst complex component SEC5A from Arabidopsis thaliana (Mouse-ear cress).